Reading from the N-terminus, the 62-residue chain is Venom protein 51.1 (62 aa).

The N-terminal stretch at 1 to 25 (MKFFGILLIVTMVVLVMIATTYVES) is a signal peptide. Cystine bridges form between C32/C53, C39/C58, and C43/C60.

In terms of tissue distribution, expressed by the venom gland.

The protein resides in the secreted. Its function is as follows. Neurotoxin. Decreases the action potential of myelinated nerves in mice and frogs. The protein is Venom protein 51.1 of Lychas mucronatus (Chinese swimming scorpion).